Consider the following 299-residue polypeptide: MEQHLDAYCMHLRSERQVSPHTLEAYRRDLSKVLAYCQKARLSSWNDLDIQHLRSFTARQHQQGQSSRSLARMLSAVRGFYKYLNREGLCQHDPANGLSPPKGERRLPKTLDTDRTAQLLDGGVEDDFLAHRDQAIMELLYSSGLRLSELTGLNLDQLDLRDGLVQVLGKGSKTRVLPVGSKARQALETWLPLRALTNPQDDAVFVSQQGKRLGPRAVQLRIKTAGERELGQNLHPHMLRHSFASHLLESSQDLRAVQELLGHADIKTTQIYTHLDFQHLATVYDSAHPRAKRKGAADD.

The Core-binding (CB) domain maps to 1-85 (MEQHLDAYCM…AVRGFYKYLN (85 aa)). The 180-residue stretch at 106 to 285 (RLPKTLDTDR…DFQHLATVYD (180 aa)) folds into the Tyr recombinase domain. Catalysis depends on residues Arg-146, Lys-170, His-237, Arg-240, and His-263. Tyr-272 serves as the catalytic O-(3'-phospho-DNA)-tyrosine intermediate.

The protein belongs to the 'phage' integrase family. XerC subfamily. Forms a cyclic heterotetrameric complex composed of two molecules of XerC and two molecules of XerD.

It localises to the cytoplasm. Functionally, site-specific tyrosine recombinase, which acts by catalyzing the cutting and rejoining of the recombining DNA molecules. The XerC-XerD complex is essential to convert dimers of the bacterial chromosome into monomers to permit their segregation at cell division. It also contributes to the segregational stability of plasmids. The polypeptide is Tyrosine recombinase XerC (Pseudomonas syringae pv. tomato (strain ATCC BAA-871 / DC3000)).